A 322-amino-acid chain; its full sequence is Large ribosomal subunit protein uL29m (322 aa).

A disordered region spans residues 1–44 (MLNVQRGLHTTVRLSARTKYTKPKPKPQARVIKSEPSQVTHHDN).

This sequence belongs to the universal ribosomal protein uL29 family. Component of the mitochondrial large ribosomal subunit. Mature mitochondrial ribosomes consist of a small (37S) and a large (54S) subunit. The 37S subunit contains at least 33 different proteins and 1 molecule of RNA (15S). The 54S subunit contains at least 45 different proteins and 1 molecule of RNA (21S).

The protein resides in the mitochondrion. This Vanderwaltozyma polyspora (strain ATCC 22028 / DSM 70294 / BCRC 21397 / CBS 2163 / NBRC 10782 / NRRL Y-8283 / UCD 57-17) (Kluyveromyces polysporus) protein is Large ribosomal subunit protein uL29m (MRPL4).